Consider the following 565-residue polypeptide: CTP synthase (565 aa).

An amidoligase domain region spans residues 1 to 272 (MARPKNVKHI…DLRVLKKLGL (272 aa)). S18 provides a ligand contact to CTP. S18 contributes to the UTP binding site. 19-24 (SLGKGI) serves as a coordination point for ATP. An L-glutamine-binding site is contributed by Y59. D76 provides a ligand contact to ATP. Residues D76 and E146 each contribute to the Mg(2+) site. CTP-binding positions include 153-155 (DIE), 193-198 (KTKPTQ), and K229. UTP is bound by residues 193–198 (KTKPTQ) and K229. Positions 299–543 (TIGICGKYTE…VAAAKEYAHG (245 aa)) constitute a Glutamine amidotransferase type-1 domain. G363 provides a ligand contact to L-glutamine. C390 (nucleophile; for glutamine hydrolysis) is an active-site residue. L-glutamine contacts are provided by residues 391 to 394 (LGMQ), E414, and R471. Residues H516 and E518 contribute to the active site.

It belongs to the CTP synthase family. Homotetramer.

The enzyme catalyses UTP + L-glutamine + ATP + H2O = CTP + L-glutamate + ADP + phosphate + 2 H(+). It catalyses the reaction L-glutamine + H2O = L-glutamate + NH4(+). It carries out the reaction UTP + NH4(+) + ATP = CTP + ADP + phosphate + 2 H(+). It participates in pyrimidine metabolism; CTP biosynthesis via de novo pathway; CTP from UDP: step 2/2. Allosterically activated by GTP, when glutamine is the substrate; GTP has no effect on the reaction when ammonia is the substrate. The allosteric effector GTP functions by stabilizing the protein conformation that binds the tetrahedral intermediate(s) formed during glutamine hydrolysis. Inhibited by the product CTP, via allosteric rather than competitive inhibition. Functionally, catalyzes the ATP-dependent amination of UTP to CTP with either L-glutamine or ammonia as the source of nitrogen. Regulates intracellular CTP levels through interactions with the four ribonucleotide triphosphates. The chain is CTP synthase from Pelodictyon phaeoclathratiforme (strain DSM 5477 / BU-1).